The chain runs to 397 residues: Tryptophan synthase beta chain (397 aa).

Lysine 87 carries the post-translational modification N6-(pyridoxal phosphate)lysine.

Belongs to the TrpB family. In terms of assembly, tetramer of two alpha and two beta chains. The cofactor is pyridoxal 5'-phosphate.

The enzyme catalyses (1S,2R)-1-C-(indol-3-yl)glycerol 3-phosphate + L-serine = D-glyceraldehyde 3-phosphate + L-tryptophan + H2O. The protein operates within amino-acid biosynthesis; L-tryptophan biosynthesis; L-tryptophan from chorismate: step 5/5. Its function is as follows. The beta subunit is responsible for the synthesis of L-tryptophan from indole and L-serine. In Escherichia coli O139:H28 (strain E24377A / ETEC), this protein is Tryptophan synthase beta chain.